The sequence spans 422 residues: Putative FBD-associated F-box protein At1g55030 (422 aa).

The region spanning 8-60 (TDMISQLPEPLILQILGSLPTKVAITTSVLSKQWQSHWKMMPKLEFDSFLRRL) is the F-box domain. LRR repeat units lie at residues 132–153 (TLET…VYLK), 154–175 (SLKT…INLL), and 180–201 (NLQD…TIAV). The FBD domain maps to 342-391 (EWNQPKNVPECLHHLEKFIWEGYKWKREEIEVAKYILKNTNRLKRAIFSL).

The polypeptide is Putative FBD-associated F-box protein At1g55030 (Arabidopsis thaliana (Mouse-ear cress)).